The following is a 656-amino-acid chain: DNA mismatch repair protein MutL (656 aa).

It belongs to the DNA mismatch repair MutL/HexB family.

In terms of biological role, this protein is involved in the repair of mismatches in DNA. It is required for dam-dependent methyl-directed DNA mismatch repair. May act as a 'molecular matchmaker', a protein that promotes the formation of a stable complex between two or more DNA-binding proteins in an ATP-dependent manner without itself being part of a final effector complex. The polypeptide is DNA mismatch repair protein MutL (Lactococcus lactis subsp. lactis (strain IL1403) (Streptococcus lactis)).